A 272-amino-acid polypeptide reads, in one-letter code: Cyanophycinase (272 aa).

Active-site charge relay system residues include Ser132, Glu150, and His174.

It belongs to the peptidase S51 family.

The catalysed reaction is [L-4-(L-arginin-2-N-yl)aspartate](n) + H2O = [L-4-(L-arginin-2-N-yl)aspartate](n-1) + L-4-(L-arginin-2-N-yl)aspartate. In terms of biological role, exopeptidase that catalyzes the hydrolytic cleavage of multi-L-arginyl-poly-L-aspartic acid (cyanophycin; a water-insoluble reserve polymer) into aspartate-arginine dipeptides. The protein is Cyanophycinase (cphB) of Geminocystis herdmanii (strain PCC 6308) (Synechocystis sp. (strain PCC 6308)).